Here is a 373-residue protein sequence, read N- to C-terminus: DNA primase small subunit PriS (373 aa).

Active-site residues include Asp95, Asp97, and Asp281.

It belongs to the eukaryotic-type primase small subunit family. Heterodimer of a small subunit (PriS) and a large subunit (PriL). Requires Mg(2+) as cofactor. Mn(2+) is required as a cofactor.

Its function is as follows. Catalytic subunit of DNA primase, an RNA polymerase that catalyzes the synthesis of short RNA molecules used as primers for DNA polymerase during DNA replication. The small subunit contains the primase catalytic core and has DNA synthesis activity on its own. Binding to the large subunit stabilizes and modulates the activity, increasing the rate of DNA synthesis while decreasing the length of the DNA fragments, and conferring RNA synthesis capability. The DNA polymerase activity may enable DNA primase to also catalyze primer extension after primer synthesis. May also play a role in DNA repair. The polypeptide is DNA primase small subunit PriS (Nitrosopumilus maritimus (strain SCM1)).